We begin with the raw amino-acid sequence, 238 residues long: Peptidyl-tRNA hydrolase (238 aa).

Tyr-14 is a tRNA binding site. The Proton acceptor role is filled by His-19. Tyr-64, Asn-66, and Asn-112 together coordinate tRNA. Residues 202–225 (PAAQSHIHQARNSAQPKKLPETGP) form a disordered region. Over residues 207–216 (HIHQARNSAQ) the composition is skewed to polar residues.

The protein belongs to the PTH family. As to quaternary structure, monomer.

Its subcellular location is the cytoplasm. It carries out the reaction an N-acyl-L-alpha-aminoacyl-tRNA + H2O = an N-acyl-L-amino acid + a tRNA + H(+). Functionally, hydrolyzes ribosome-free peptidyl-tRNAs (with 1 or more amino acids incorporated), which drop off the ribosome during protein synthesis, or as a result of ribosome stalling. In terms of biological role, catalyzes the release of premature peptidyl moieties from peptidyl-tRNA molecules trapped in stalled 50S ribosomal subunits, and thus maintains levels of free tRNAs and 50S ribosomes. The sequence is that of Peptidyl-tRNA hydrolase from Agrobacterium fabrum (strain C58 / ATCC 33970) (Agrobacterium tumefaciens (strain C58)).